Here is a 536-residue protein sequence, read N- to C-terminus: Protein ST7 homolog (536 aa).

The next 2 membrane-spanning stretches (helical) occupy residues 3-23 (CSWTFLWLLWIALVAVLLFAL) and 49-69 (FYVALTGTSSLVSGIILIFEW). Residues 191–218 (LAEEESETVSQAENLLRRALRAIESTLN) are a coiled coil. The helical transmembrane segment at 465 to 485 (TLMMLLQTFICLAICILAVLA) threads the bilayer.

The protein belongs to the ST7 family.

Its subcellular location is the membrane. This is Protein ST7 homolog from Caenorhabditis elegans.